The following is a 398-amino-acid chain: Acetyl-CoA acetyltransferase (398 aa).

Serine 2 carries the post-translational modification N-acetylserine. The active-site Acyl-thioester intermediate is cysteine 91. CoA is bound by residues tyrosine 186 and lysine 231. Residue tyrosine 186 participates in K(+) binding. Residues alanine 248, alanine 249, and alanine 251 each contribute to the K(+) site. Serine 252 is a binding site for CoA. Valine 350 is a K(+) binding site. Catalysis depends on proton acceptor residues histidine 354 and cysteine 384.

Belongs to the thiolase-like superfamily. Thiolase family. As to quaternary structure, homotetramer.

Its subcellular location is the cytoplasm. It localises to the cytosol. The catalysed reaction is 2 acetyl-CoA = acetoacetyl-CoA + CoA. The protein operates within metabolic intermediate biosynthesis; (R)-mevalonate biosynthesis; (R)-mevalonate from acetyl-CoA: step 1/3. Its function is as follows. Acetyl-CoA acetyltransferase; part of the first module of ergosterol biosynthesis pathway that includes the early steps of the pathway, conserved across all eukaryotes, and which results in the formation of mevalonate from acetyl-coenzyme A (acetyl-CoA). ERG10 catalyzes the formation of acetoacetyl-CoA from acetyl-CoA. The first module starts with the action of the cytosolic acetyl-CoA acetyltransferase ERG10 that catalyzes the formation of acetoacetyl-CoA. The hydroxymethylglutaryl-CoA synthase ERG13 then condenses acetyl-CoA with acetoacetyl-CoA to form HMG-CoA. The rate-limiting step of the early module is the reduction to mevalonate by the 3-hydroxy-3-methylglutaryl-coenzyme A (HMG-CoA) reductases HMG1 and HMG2 which are derived from a single ancestral HMGR gene by gene duplication. This chain is Acetyl-CoA acetyltransferase, found in Saccharomyces cerevisiae (strain ATCC 204508 / S288c) (Baker's yeast).